The chain runs to 37 residues: MKVRASVKTICRNCKVIRRNGVVRVICKDPRHKQRQG.

This sequence belongs to the bacterial ribosomal protein bL36 family.

The chain is Large ribosomal subunit protein bL36 from Thioalkalivibrio sulfidiphilus (strain HL-EbGR7).